The following is a 644-amino-acid chain: Exoribonuclease 2 (644 aa).

Positions 189–516 constitute an RNB domain; it reads REDLTALDFV…NHRLLKAVIK (328 aa). Positions 561–643 constitute an S1 motif domain; the sequence is DTRFAAEIVD…ETRSIIARPV (83 aa).

It belongs to the RNR ribonuclease family. RNase II subfamily.

The protein localises to the cytoplasm. It catalyses the reaction Exonucleolytic cleavage in the 3'- to 5'-direction to yield nucleoside 5'-phosphates.. Functionally, involved in mRNA degradation. Hydrolyzes single-stranded polyribonucleotides processively in the 3' to 5' direction. The polypeptide is Exoribonuclease 2 (Shigella dysenteriae serotype 1 (strain Sd197)).